The sequence spans 550 residues: Methyl-accepting chemotaxis protein PcaY (550 aa).

The Cytoplasmic portion of the chain corresponds to 1-19 (MVPTRSTARMLANLKIRTG). The helical transmembrane segment at 20-40 (MFWVLSLFSLTLLFSTASAWW) threads the bilayer. Residues 41 to 198 (AALGSDQQIT…ESDRRLARAQ (158 aa)) are Periplasmic-facing. The tract at residues 44-196 (GSDQQITELD…MLESDRRLAR (153 aa)) is ligand-binding domain. Residues Arg71 and Asn75 each coordinate benzoate. Arg71, Asn75, and Tyr135 together coordinate salicylate. 3,4-dihydroxybenzoate is bound at residue 71 to 78 (RSSANVSS). L-quinate is bound by residues 71 to 78 (RSSANVSS), Tyr135, Gln142, and Asn158. Residue Gln169 coordinates 3,4-dihydroxybenzoate. Residues 199–219 (LLSLCLLGVTVVLAVLCWAFI) traverse the membrane as a helical segment. The Cytoplasmic portion of the chain corresponds to 220-550 (AQRVLHPLRE…MTALVGRFKV (331 aa)). In terms of domain architecture, HAMP spans 221–273 (QRVLHPLREAGGHFRRIASGDLSVPVQGQGNNEIGQLFHELQRMQQSQRDTLG). Residues 278–514 (CARQLDAAAT…EVDRNLLNIR (237 aa)) form the Methyl-accepting transducer domain.

The protein belongs to the methyl-accepting chemotaxis (MCP) protein family. In terms of assembly, ligand free PcaY_PP-ligand-binding domain (LBD) is present in a monomer-dimer equilibrium. Only the dimeric LBD is able to bind ligands which in turn causes dimer stabilization.

The protein resides in the cell inner membrane. In terms of biological role, chemotactic-signal transducers respond to changes in the concentration of attractants and repellents in the environment, transduce a signal from the outside to the inside of the cell, and facilitate sensory adaptation through the variation of the level of methylation. PcaY recognizes a wide range of compounds containing a C6-membered ring with a carboxylate group. Binds preferentially compounds that serve as carbon sources and among them those that rapidly promote growth. Tightest binding compounds are quinate, shikimate, 3-dehydroshikimate and protocatechuate, which are at the interception of the biosynthetic shikimate and catabolic quinate pathways. In Pseudomonas putida (strain ATCC 47054 / DSM 6125 / CFBP 8728 / NCIMB 11950 / KT2440), this protein is Methyl-accepting chemotaxis protein PcaY.